The sequence spans 246 residues: E3 ubiquitin ligase TRIM40 (246 aa).

Residues 12–55 form an RING-type zinc finger; that stretch reads CPICLDPLKEAVSTDCRHLFCRMCLTQHMDKASVSGILSCPVCR. Residues 64-105 form a B box-type zinc finger; the sequence is GDNYICHTHQKRVRRFCEASGHLLCEECLQSPEHQSHTELSI. Residues C69, H72, C91, and H97 each contribute to the Zn(2+) site. Residues 105–170 adopt a coiled-coil conformation; the sequence is IENAISHYKE…DQTKEQLKAL (66 aa).

This sequence belongs to the TRIM/RBCC family. In terms of assembly, interacts with NEDD8.

The enzyme catalyses S-ubiquitinyl-[E2 ubiquitin-conjugating enzyme]-L-cysteine + [acceptor protein]-L-lysine = [E2 ubiquitin-conjugating enzyme]-L-cysteine + N(6)-ubiquitinyl-[acceptor protein]-L-lysine.. In terms of biological role, E3 ubiquitin-protein ligase that plays a role in the limitation of the innate immune response. Mediates inhibition of the RLR signaling pathway by ubiquitinating RIGI and IFIH1 receptors, leading to their proteasomal degradation. Also promotes the neddylation of IKBKG/NEMO, stabilizing NFKBIA, and thereby inhibiting of NF-kappa-B nuclear translocation and activation. The polypeptide is E3 ubiquitin ligase TRIM40 (Trim40) (Mus musculus (Mouse)).